A 130-amino-acid chain; its full sequence is YopE regulator (130 aa).

Its function is as follows. Positive regulator of YopE. The chain is YopE regulator (yerA) from Yersinia pestis.